We begin with the raw amino-acid sequence, 1488 residues long: Calmodulin binding protein PICBP (1488 aa).

4 disordered regions span residues 1-31 (MSNP…RKMW), 63-112 (TAES…SRIS), 280-329 (GPLG…GRSS), and 378-414 (HDHD…EEDG). Residues 18–31 (SSRRVHKRRERKMW) show a composition bias toward basic residues. Basic and acidic residues predominate over residues 76 to 86 (DDSRTYSKSSD). A compositionally biased stretch (basic residues) spans 98 to 107 (SVKRRAKSKS). The segment covering 297–312 (DNVDGDSDEEVFEEEV) has biased composition (acidic residues). Calmodulin-binding stretches follow at residues 493 to 592 (TFHM…SLIP) and 831 to 938 (NSLK…DIVL). Disordered stretches follow at residues 816–844 (IPDS…GETK) and 941–971 (HDTP…EGCE). Composition is skewed to basic and acidic residues over residues 833–844 (LKEEKEHQGETK) and 954–971 (RNND…EGCE). Positions 1135 to 1229 (EKRVKGWNNV…SLLAQAFDTI (95 aa)) are calmodulin-binding. Disordered stretches follow at residues 1232–1252 (QDMG…ISRQ) and 1316–1340 (EKNQ…DTSV). The segment covering 1235-1252 (GSGSTPGSAASSRNISRQ) has biased composition (low complexity). The span at 1316-1328 (EKNQTLPEETRKE) shows a compositional bias: basic and acidic residues. The interval 1379–1483 (RQKSETLQVS…QLLVQAFESL (105 aa)) is calmodulin-binding.

In terms of biological role, binds calmodulin in a calcium-dependent manner in vitro. May play a role in general plant defense including R gene-mediated responses. The sequence is that of Calmodulin binding protein PICBP from Arabidopsis thaliana (Mouse-ear cress).